The following is a 419-amino-acid chain: L-rhamnose isomerase (419 aa).

Mn(2+)-binding residues include His-262, Asp-294, and Asp-296.

Belongs to the rhamnose isomerase family. As to quaternary structure, homotetramer. Requires Mn(2+) as cofactor.

The protein resides in the cytoplasm. The catalysed reaction is L-rhamnopyranose = L-rhamnulose. It participates in carbohydrate degradation; L-rhamnose degradation; glycerone phosphate from L-rhamnose: step 1/3. Its function is as follows. Catalyzes the interconversion of L-rhamnose and L-rhamnulose. The sequence is that of L-rhamnose isomerase from Escherichia fergusonii (strain ATCC 35469 / DSM 13698 / CCUG 18766 / IAM 14443 / JCM 21226 / LMG 7866 / NBRC 102419 / NCTC 12128 / CDC 0568-73).